Here is a 493-residue protein sequence, read N- to C-terminus: Mitochondrial distribution and morphology protein 10 (493 aa).

The protein belongs to the MDM10 family. In terms of assembly, component of the ER-mitochondria encounter structure (ERMES) or MDM complex, composed of MMM1, MDM10, MDM12 and MDM34. Associates with the mitochondrial outer membrane sorting assembly machinery SAM(core) complex, which consists of SAM35, SAM37 and SAM50, to form a SAM(holo) complex.

It is found in the mitochondrion outer membrane. Functionally, component of the ERMES/MDM complex, which serves as a molecular tether to connect the endoplasmic reticulum and mitochondria. Components of this complex are involved in the control of mitochondrial shape and protein biogenesis and may function in phospholipid exchange. MDM10 is involved in the late assembly steps of the general translocase of the mitochondrial outer membrane (TOM complex). Functions in the TOM40-specific route of the assembly of outer membrane beta-barrel proteins, including the association of TOM40 with the receptor TOM22 and small TOM proteins. Can associate with the SAM(core) complex as well as the MDM12-MMM1 complex, both involved in late steps of the major beta-barrel assembly pathway, that is responsible for biogenesis of all outer membrane beta-barrel proteins. May act as a switch that shuttles between both complexes and channels precursor proteins into the TOM40-specific pathway. Plays a role in mitochondrial morphology and in the inheritance of mitochondria. This Saccharomyces cerevisiae (strain ATCC 204508 / S288c) (Baker's yeast) protein is Mitochondrial distribution and morphology protein 10.